The sequence spans 766 residues: Single-minded homolog 1 (766 aa).

Positions 1–53 (MKEKSKNAARTRREKENSEFYELAKLLPLPSAITSQLDKASIIRLTTSYLKMR) constitute a bHLH domain. 2 consecutive PAS domains span residues 77–147 (GREL…QPYH) and 218–288 (PPSA…LVKG). The region spanning 292-335 (TKYYRFLAKHGGWVWVQSYATIVHNSRSSRPHCIVSVNYVLTDT) is the PAC domain. The Single-minded C-terminal domain occupies 336-766 (EYKGLQLSLD…GTSVIITNGS (431 aa)). The span at 353–365 (AFSYTSSSTPTMT) shows a compositional bias: polar residues. Disordered regions lie at residues 353–431 (AFSY…SQHD) and 528–563 (WDED…EPSK). Residues 368–387 (RKGAKSRLSSSKSKSRTSPY) carry the Nuclear localization signal motif. Low complexity predominate over residues 373 to 385 (SRLSSSKSKSRTS). Over residues 394-404 (HTERSESDHDS) the composition is skewed to basic and acidic residues.

Efficient DNA binding requires dimerization with another bHLH protein. Heterodimer; forms a heterodimer with ARNT, ARNT2.

It localises to the nucleus. Functionally, transcriptional factor that may have pleiotropic effects during embryogenesis and in the adult. This Homo sapiens (Human) protein is Single-minded homolog 1 (SIM1).